A 354-amino-acid chain; its full sequence is Alternative oxidase, mitochondrial (354 aa).

Residues 1–64 constitute a mitochondrion transit peptide; it reads MNSMSTTGPI…RFISSTPQSQ (64 aa). Residues 153–173 traverse the membrane as a helical segment; it reads FVFLESVAGVPGMVGGMLRHL. Residues Glu-157, Glu-196, and His-199 each coordinate Fe cation. A helical transmembrane segment spans residues 215 to 235; sequence LMVLGAQGVFFNGFFLSYLIS. Residues Glu-247, Glu-302, and His-305 each coordinate Fe cation. Residues 333–354 are disordered; that stretch reads KPHPGKGIKHLKTTGWEREEVV. Residues 335–344 are compositionally biased toward basic residues; it reads HPGKGIKHLK.

Belongs to the alternative oxidase family. Fe cation serves as cofactor.

Its subcellular location is the mitochondrion inner membrane. Its function is as follows. Catalyzes cyanide-resistant oxygen consumption. May increase respiration when the cytochrome respiratory pathway is restricted, or in response to low temperatures. In Emericella nidulans (strain FGSC A4 / ATCC 38163 / CBS 112.46 / NRRL 194 / M139) (Aspergillus nidulans), this protein is Alternative oxidase, mitochondrial (alxA).